We begin with the raw amino-acid sequence, 528 residues long: GMP synthase [glutamine-hydrolyzing] (528 aa).

Positions 13-204 (AIVILDFGSQ…VNHICGCEQD (192 aa)) constitute a Glutamine amidotransferase type-1 domain. The Nucleophile role is filled by Cys90. Active-site residues include His178 and Glu180. The region spanning 205–403 (WTTNAFIDEA…LGLPEEIVRR (199 aa)) is the GMPS ATP-PPase domain. 232–238 (SGGVDSS) lines the ATP pocket.

In terms of assembly, homodimer.

It carries out the reaction XMP + L-glutamine + ATP + H2O = GMP + L-glutamate + AMP + diphosphate + 2 H(+). It functions in the pathway purine metabolism; GMP biosynthesis; GMP from XMP (L-Gln route): step 1/1. In terms of biological role, catalyzes the synthesis of GMP from XMP. This Synechococcus sp. (strain CC9902) protein is GMP synthase [glutamine-hydrolyzing].